The sequence spans 148 residues: MKALLVLGFLLLSASVQAKVFKHCELARILRSSALAGYRGVSLENWMCMAQHESNFDTEAINYNSTDQSTDYGIFQINSRYWCNDGKTPRAVNACGIPCSALLQDDITQAIQCAKRVVRDPQGIRAWVAWQRHCQNRDLSGYIRNCGV.

A signal peptide spans 1 to 18 (MKALLVLGFLLLSASVQA). The C-type lysozyme domain occupies 19–148 (KVFKHCELAR…LSGYIRNCGV (130 aa)). Disulfide bonds link cysteine 24–cysteine 146, cysteine 48–cysteine 134, cysteine 83–cysteine 99, and cysteine 95–cysteine 113. Active-site residues include glutamate 53 and aspartate 71.

This sequence belongs to the glycosyl hydrolase 22 family. In terms of assembly, monomer.

It is found in the secreted. The catalysed reaction is Hydrolysis of (1-&gt;4)-beta-linkages between N-acetylmuramic acid and N-acetyl-D-glucosamine residues in a peptidoglycan and between N-acetyl-D-glucosamine residues in chitodextrins.. Lysozymes have primarily a bacteriolytic function; those in tissues and body fluids are associated with the monocyte-macrophage system and enhance the activity of immunoagents. In the intestine they may also have a digestive function. In Rattus norvegicus (Rat), this protein is Putative lysozyme C-2 (Lyz2).